Consider the following 442-residue polypeptide: UPF0489 protein C5orf22 (442 aa).

Residues 175 to 210 (SSAKKPKLALEDSENTASTNCDSSSEGLEKDTATQR) form a disordered region. Residues 189 to 200 (NTASTNCDSSSE) are compositionally biased toward polar residues.

The protein belongs to the UPF0489 family.

The polypeptide is UPF0489 protein C5orf22 (C5orf22) (Homo sapiens (Human)).